Here is a 538-residue protein sequence, read N- to C-terminus: Fusion glycoprotein F0 (538 aa).

An N-terminal signal peptide occupies residues 1 to 18 (MDVRICLLLFLISNPSSC). The Extracellular portion of the chain corresponds to 19–489 (IQETYNEESC…LLGADAKSKA (471 aa)). Cystine bridges form between Cys-28–Cys-407, Cys-60–Cys-182, Cys-283–Cys-311, Cys-292–Cys-301, Cys-326–Cys-335, Cys-350–Cys-361, and Cys-384–Cys-390. A glycan (N-linked (GlcNAc...) asparagine; by host) is linked at Asn-57. Fusion peptide regions lie at residues 103 to 124 (FVLGAIALGVATAAAVTAGVAL) and 103 to 127 (FVLGAIALGVATAAAVTAGVALAKT). The stretch at 125–153 (AKTIRLEGEVKAIKNALRNTNEAVSTLGN) forms a coiled coil. An N-linked (GlcNAc...) asparagine; by host glycan is attached at Asn-353. Residues 459-484 (ALDQVFESIDRSQDLIDKSNDLLGAD) are a coiled coil. The chain crosses the membrane as a helical span at residues 490 to 510 (GIAIAIVVLVILGIFFLLAVI). At 511 to 538 (YYCSRVRKTKPKHDYPATTGHSSMAYVS) the chain is on the cytoplasmic side. Residue Cys-513 is the site of S-palmitoyl cysteine; by host attachment.

Belongs to the paramyxoviruses fusion glycoprotein family. In terms of assembly, homotrimer. Heterodimer with fusion protein F2; disulfide-linked. As a heterodimer with F2, interacts with host heparan sulfate. Part of a complex composed of F1, F2 and G glycoproteins. As to quaternary structure, homotrimer. Heterodimer with fusion protein F1; disulfide-linked. As a heterodimer with F1, interacts with host heparan sulfate. Part of a complex composed of F1, F2 and G glycoproteins. Post-translationally, the F glycoprotein is synthesized as a F0 inactive precursor that is heavily N-glycosylated and processed.

Its subcellular location is the host Golgi apparatus membrane. It localises to the virion membrane. The protein resides in the host cell membrane. In terms of biological role, inactive precursor that is cleaved to give rise to the mature F1 and F2 fusion glycoproteins. Class I viral fusion protein. Under the current model, the protein has at least 3 conformational states: pre-fusion native state, pre-hairpin intermediate state, and post-fusion hairpin state. During viral and plasma cell membrane fusion, the coiled coil regions assume a trimer-of-hairpins structure, positioning the fusion peptide in close proximity to the C-terminal region of the ectodomain. The formation of this structure appears to drive apposition and subsequent fusion of viral and cellular membranes leading to delivery of the nucleocapsid into the cytoplasm. This fusion is pH independent and occurs at the plasma or endosomal membrane. The trimer of F1-F2 (F protein) also facilitates the attachment to host cell by binding to host heparan sulfate. Its function is as follows. Major determinant of the species specificity of RSV infection. The trimer of F1-F2 (F protein) also facilitates the attachment to host cell by binding to host heparan sulfate. The sequence is that of Fusion glycoprotein F0 (F) from Meleagris gallopavo (Wild turkey).